A 309-amino-acid chain; its full sequence is Succinate--CoA ligase [ADP-forming] subunit alpha-2, mitochondrial (309 aa).

Residues 1–9 (MLSSSFERN) constitute a hydrogenosome transit peptide. CoA is bound by residues K54 and 107–109 (ITE). Y171 is a binding site for substrate. The active-site Tele-phosphohistidine intermediate is the H262.

This sequence belongs to the succinate/malate CoA ligase alpha subunit family. As to quaternary structure, heterodimer of an alpha and a beta subunit.

It localises to the hydrogenosome lumen. The enzyme catalyses succinate + ATP + CoA = succinyl-CoA + ADP + phosphate. It participates in carbohydrate metabolism; tricarboxylic acid cycle; succinate from succinyl-CoA (ligase route): step 1/1. Its function is as follows. Succinyl-CoA synthetase functions in the citric acid cycle (TCA), coupling the hydrolysis of succinyl-CoA to the synthesis of ATP and thus represents the only step of substrate-level phosphorylation in the TCA. The alpha subunit of the enzyme binds the substrates coenzyme A and phosphate, while succinate binding and nucleotide specificity is provided by the beta subunit. In Trichomonas vaginalis, this protein is Succinate--CoA ligase [ADP-forming] subunit alpha-2, mitochondrial (ALPHA-SCS2).